A 46-amino-acid polypeptide reads, in one-letter code: Photosystem II reaction center protein K (46 aa).

The propeptide occupies 1-9 (MLTLLNTFA). A helical membrane pass occupies residues 25–45 (LPLIPLFFFLLVFVWQAAVGF).

This sequence belongs to the PsbK family. In terms of assembly, PSII is composed of 1 copy each of membrane proteins PsbA, PsbB, PsbC, PsbD, PsbE, PsbF, PsbH, PsbI, PsbJ, PsbK, PsbL, PsbM, PsbT, PsbX, PsbY, Psb30/Ycf12, peripheral proteins PsbO, CyanoQ (PsbQ), PsbU, PsbV and a large number of cofactors. It forms dimeric complexes.

Its subcellular location is the cellular thylakoid membrane. Functionally, one of the components of the core complex of photosystem II (PSII). PSII is a light-driven water:plastoquinone oxidoreductase that uses light energy to abstract electrons from H(2)O, generating O(2) and a proton gradient subsequently used for ATP formation. It consists of a core antenna complex that captures photons, and an electron transfer chain that converts photonic excitation into a charge separation. This Prochlorococcus marinus (strain MIT 9515) protein is Photosystem II reaction center protein K.